A 453-amino-acid chain; its full sequence is Succinate-semialdehyde dehydrogenase (acetylating) (453 aa).

188–193 (ATGGAG) contacts NADP(+). The active site involves cysteine 242.

Homodimer.

The catalysed reaction is succinate semialdehyde + NADP(+) + CoA = succinyl-CoA + NADPH + H(+). Its function is as follows. Catalyzes the reduction of succinate semialdehyde to succinyl-CoA. The enzyme is specific for succinate semialdehyde and succinyl-CoA, and only shows low activity with palmitoyl-CoA. There is no activity with NAD(+) as cosubstrate. The protein is Succinate-semialdehyde dehydrogenase (acetylating) (sucD) of Clostridium kluyveri (strain ATCC 8527 / DSM 555 / NBRC 12016 / NCIMB 10680 / K1).